The following is a 341-amino-acid chain: UPF0283 membrane protein VV2076 (341 aa).

4 helical membrane passes run 64–84 (LAGG…VDSV), 93–113 (WLTL…LGAM), 207–227 (ESAA…LVAW), and 255–275 (LVLA…AGMD).

It belongs to the UPF0283 family.

Its subcellular location is the cell inner membrane. This Vibrio vulnificus (strain YJ016) protein is UPF0283 membrane protein VV2076.